We begin with the raw amino-acid sequence, 180 residues long: tRNA-splicing endonuclease (180 aa).

Catalysis depends on residues Tyr117, His125, and Lys156.

It belongs to the tRNA-intron endonuclease family. Archaeal short subfamily. In terms of assembly, homotetramer; although the tetramer contains four active sites, only two participate in the cleavage. Therefore, it should be considered as a dimer of dimers.

The enzyme catalyses pretRNA = a 3'-half-tRNA molecule with a 5'-OH end + a 5'-half-tRNA molecule with a 2',3'-cyclic phosphate end + an intron with a 2',3'-cyclic phosphate and a 5'-hydroxyl terminus.. Endonuclease that removes tRNA introns. Cleaves pre-tRNA at the 5'- and 3'-splice sites to release the intron. The products are an intron and two tRNA half-molecules bearing 2',3' cyclic phosphate and 5'-OH termini. Recognizes a pseudosymmetric substrate in which 2 bulged loops of 3 bases are separated by a stem of 4 bp. The polypeptide is tRNA-splicing endonuclease (Sulfurisphaera tokodaii (strain DSM 16993 / JCM 10545 / NBRC 100140 / 7) (Sulfolobus tokodaii)).